Here is a 147-residue protein sequence, read N- to C-terminus: Hemoglobin subunit gamma (147 aa).

A Globin domain is found at 3-147 (HFTVEEKAVI…VAIALAHKYH (145 aa)). Heme b is bound by residues His64 and His93.

This sequence belongs to the globin family. Heterotetramer of two alpha chains and two gamma chains in fetal hemoglobin (Hb F). Red blood cells.

Its function is as follows. Gamma chains make up the fetal hemoglobin F, in combination with alpha chains. The polypeptide is Hemoglobin subunit gamma (HBG) (Cheirogaleus medius (Fat-tailed dwarf lemur)).